We begin with the raw amino-acid sequence, 669 residues long: UvrABC system protein B (669 aa).

Positions 26–414 (EGLEDGLAHQ…SGDVVEQVVR (389 aa)) constitute a Helicase ATP-binding domain. Residue 39-46 (GVTGSGKT) participates in ATP binding. The Beta-hairpin signature appears at 92-115 (YYDYYQPEAYVPSSDTFIEKDASV). Residues 431 to 597 (QVDDLLSEIR…GLNKKINDIL (167 aa)) enclose the Helicase C-terminal domain. One can recognise a UVR domain in the interval 629–664 (ESKIRELEAKMYQHAQDLEFEQAASVRDQVQALREQ).

It belongs to the UvrB family. In terms of assembly, forms a heterotetramer with UvrA during the search for lesions. Interacts with UvrC in an incision complex.

It localises to the cytoplasm. Its function is as follows. The UvrABC repair system catalyzes the recognition and processing of DNA lesions. A damage recognition complex composed of 2 UvrA and 2 UvrB subunits scans DNA for abnormalities. Upon binding of the UvrA(2)B(2) complex to a putative damaged site, the DNA wraps around one UvrB monomer. DNA wrap is dependent on ATP binding by UvrB and probably causes local melting of the DNA helix, facilitating insertion of UvrB beta-hairpin between the DNA strands. Then UvrB probes one DNA strand for the presence of a lesion. If a lesion is found the UvrA subunits dissociate and the UvrB-DNA preincision complex is formed. This complex is subsequently bound by UvrC and the second UvrB is released. If no lesion is found, the DNA wraps around the other UvrB subunit that will check the other stand for damage. This is UvrABC system protein B from Photorhabdus laumondii subsp. laumondii (strain DSM 15139 / CIP 105565 / TT01) (Photorhabdus luminescens subsp. laumondii).